Reading from the N-terminus, the 588-residue chain is Aspartate--tRNA ligase (588 aa).

Glu-174 provides a ligand contact to L-aspartate. The interval 198–201 is aspartate; the sequence is QLFK. Position 220 (Arg-220) interacts with L-aspartate. ATP contacts are provided by residues 220 to 222 and Gln-229; that span reads RDE. Residue His-448 coordinates L-aspartate. Glu-482 provides a ligand contact to ATP. Arg-489 contacts L-aspartate. Position 534–537 (534–537) interacts with ATP; the sequence is GIDR.

Belongs to the class-II aminoacyl-tRNA synthetase family. Type 1 subfamily. In terms of assembly, homodimer.

The protein localises to the cytoplasm. The catalysed reaction is tRNA(Asp) + L-aspartate + ATP = L-aspartyl-tRNA(Asp) + AMP + diphosphate. Its function is as follows. Catalyzes the attachment of L-aspartate to tRNA(Asp) in a two-step reaction: L-aspartate is first activated by ATP to form Asp-AMP and then transferred to the acceptor end of tRNA(Asp). The chain is Aspartate--tRNA ligase from Xanthomonas oryzae pv. oryzae (strain MAFF 311018).